A 199-amino-acid polypeptide reads, in one-letter code: Large ribosomal subunit protein bL17 (199 aa).

Residues 123-199 (DEANRARRAA…EESEAKDDTK (77 aa)) are disordered. The segment covering 137–152 (KADERADEKADEKAEE) has biased composition (basic and acidic residues). The span at 153-199 (TVEETTEAPAEESTEAAAEETVEETTEAPAEESTEAAEESEAKDDTK) shows a compositional bias: acidic residues.

The protein belongs to the bacterial ribosomal protein bL17 family. Part of the 50S ribosomal subunit. Contacts protein L32.

This Mycolicibacterium smegmatis (strain ATCC 700084 / mc(2)155) (Mycobacterium smegmatis) protein is Large ribosomal subunit protein bL17.